Consider the following 591-residue polypeptide: L-fucose isomerase (591 aa).

Active-site proton acceptor residues include glutamate 337 and aspartate 361. 3 residues coordinate Mn(2+): glutamate 337, aspartate 361, and histidine 528.

It belongs to the L-fucose isomerase family. As to quaternary structure, homohexamer. Mn(2+) is required as a cofactor.

It localises to the cytoplasm. It carries out the reaction L-fucose = L-fuculose. Its pathway is carbohydrate degradation; L-fucose degradation; L-lactaldehyde and glycerone phosphate from L-fucose: step 1/3. In terms of biological role, converts the aldose L-fucose into the corresponding ketose L-fuculose. This Escherichia coli (strain SMS-3-5 / SECEC) protein is L-fucose isomerase.